Reading from the N-terminus, the 120-residue chain is Large ribosomal subunit protein bL12 (120 aa).

Belongs to the bacterial ribosomal protein bL12 family. In terms of assembly, homodimer. Part of the ribosomal stalk of the 50S ribosomal subunit. Forms a multimeric L10(L12)X complex, where L10 forms an elongated spine to which 2 to 4 L12 dimers bind in a sequential fashion. Binds GTP-bound translation factors.

In terms of biological role, forms part of the ribosomal stalk which helps the ribosome interact with GTP-bound translation factors. Is thus essential for accurate translation. The polypeptide is Large ribosomal subunit protein bL12 (Listeria monocytogenes serovar 1/2a (strain ATCC BAA-679 / EGD-e)).